The primary structure comprises 240 residues: uncharacterized protein (240 aa).

The signal sequence occupies residues 1 to 18 (MTRYTYLFILQIISCSFA). Asn127 carries an N-linked (GlcNAc...) asparagine glycan. A helical membrane pass occupies residues 215-235 (GFISSSQLPQFVYLIVFTIIG).

The protein resides in the membrane. This is an uncharacterized protein from Caenorhabditis elegans.